A 645-amino-acid chain; its full sequence is Aminopeptidase P1 (645 aa).

S2 bears the N-acetylserine mark. A peptide is bound by residues R69 and H420. Mn(2+) contacts are provided by D440, D451, and H514. A peptide contacts are provided by H514, H523, and E549. Positions 549 and 563 each coordinate Mn(2+).

This sequence belongs to the peptidase M24B family. Homodimer. Interacts with N-1-naphthylphthalamic acid (NPA). The cofactor is Mn(2+). Zn(2+) is required as a cofactor. In terms of processing, glycosylated. Also present in a non-glycosylated form. In terms of tissue distribution, ubiquitous with preferential expression in 5 days-old seedlings, roots, flowers, inflorescences and rosette leaves (at protein levels).

The protein resides in the cytoplasm. Its subcellular location is the cell membrane. It localises to the microsome membrane. It catalyses the reaction Release of any N-terminal amino acid, including proline, that is linked to proline, even from a dipeptide or tripeptide.. Inhibited by EGTA and apstatin, and, to some extent, by the flavonoid kaempferol. In terms of biological role, catalyzes the removal of a penultimate prolyl residue from the N-termini of peptides, such as Arg-Pro-Pro. Aminopeptidase that binds to the auxin transport inhibitor N-1-naphthylphthalamic acid (NPA). May play a negative role in the regulation of PIN auxin transport proteins. This is Aminopeptidase P1 from Arabidopsis thaliana (Mouse-ear cress).